The chain runs to 326 residues: D-amino-acid oxidase (326 aa).

Positions 18, 19, 46, 47, 48, 52, 53, 162, and 179 each coordinate FAD. D-proline is bound by residues Tyr-222 and Arg-277. D-serine contacts are provided by Tyr-222 and Arg-277. Residues Arg-277, Gly-303, Gly-304, Gly-306, and Thr-308 each contribute to the FAD site. Gly-304 provides a ligand contact to D-proline. Gly-304 serves as a coordination point for D-serine.

It belongs to the DAMOX/DASOX family. Monomer. The cofactor is FAD.

The protein localises to the cytoplasm. It is found in the secreted. Its subcellular location is the cell wall. The catalysed reaction is a D-alpha-amino acid + O2 + H2O = a 2-oxocarboxylate + H2O2 + NH4(+). The enzyme catalyses D-valine + O2 + H2O = 3-methyl-2-oxobutanoate + H2O2 + NH4(+). It carries out the reaction D-leucine + O2 + H2O = 4-methyl-2-oxopentanoate + H2O2 + NH4(+). It catalyses the reaction D-isoleucine + O2 + H2O = (R)-3-methyl-2-oxopentanoate + H2O2 + NH4(+). The catalysed reaction is D-tyrosine + O2 + H2O = 3-(4-hydroxyphenyl)pyruvate + H2O2 + NH4(+). The enzyme catalyses D-threonine + O2 + H2O = (S)-3-hydroxy-2-oxobutanoate + H2O2 + NH4(+). Its activity is regulated as follows. Inhibited by benzoate and phenylmethylsulfonyl fluoride (PMSF). Weakly inhibited by anthranilate, crotonate, and the amino acid-modifying agents dithionitrobenzoic acid and diethyl pyrocarbonate. Not inhibited by malonate, meso-tartrate, D-malate, or the amino acid-modifying agents iodoacetic acid or butane-2,3-dione. Functionally, catalyzes the oxidative deamination of D-amino acids with broad substrate specificity. This Rubrobacter xylanophilus (strain DSM 9941 / JCM 11954 / NBRC 16129 / PRD-1) protein is D-amino-acid oxidase.